Reading from the N-terminus, the 199-residue chain is Imidazole glycerol phosphate synthase subunit HisH 2 (199 aa).

Residues methionine 1–cysteine 199 form the Glutamine amidotransferase type-1 domain. Catalysis depends on cysteine 76, which acts as the Nucleophile. Active-site residues include histidine 177 and glutamate 179.

Heterodimer of HisH and HisF.

The protein localises to the cytoplasm. It carries out the reaction 5-[(5-phospho-1-deoxy-D-ribulos-1-ylimino)methylamino]-1-(5-phospho-beta-D-ribosyl)imidazole-4-carboxamide + L-glutamine = D-erythro-1-(imidazol-4-yl)glycerol 3-phosphate + 5-amino-1-(5-phospho-beta-D-ribosyl)imidazole-4-carboxamide + L-glutamate + H(+). It catalyses the reaction L-glutamine + H2O = L-glutamate + NH4(+). The protein operates within amino-acid biosynthesis; L-histidine biosynthesis; L-histidine from 5-phospho-alpha-D-ribose 1-diphosphate: step 5/9. Functionally, IGPS catalyzes the conversion of PRFAR and glutamine to IGP, AICAR and glutamate. The HisH subunit provides the glutamine amidotransferase activity that produces the ammonia necessary to HisF for the synthesis of IGP and AICAR. In Legionella pneumophila (strain Lens), this protein is Imidazole glycerol phosphate synthase subunit HisH 2.